Reading from the N-terminus, the 336-residue chain is Serpentine receptor class gamma-13 (336 aa).

8 helical membrane passes run 32 to 52 (LKYI…FLII), 68 to 88 (FFII…SEIL), 93 to 113 (FIYV…PSIF), 133 to 153 (VFLS…SAIW), 156 to 176 (ILTP…WNVL), 210 to 230 (FIVS…ALLI), 246 to 266 (TMVL…FAFF), and 277 to 297 (LLRV…IIFI).

This sequence belongs to the nematode receptor-like protein srg family.

It localises to the membrane. The chain is Serpentine receptor class gamma-13 (srg-13) from Caenorhabditis elegans.